A 434-amino-acid chain; its full sequence is Probable zinc metalloprotease PTRG_04772 (434 aa).

Asn-88 carries N-linked (GlcNAc...) asparagine glycosylation. Zn(2+) is bound by residues His-111, Asp-131, and Glu-164. N-linked (GlcNAc...) asparagine glycosylation occurs at Asn-179. Zn(2+) is bound at residue Asp-191. N-linked (GlcNAc...) asparagine glycosylation is found at Asn-220, Asn-299, Asn-347, Asn-353, Asn-390, and Asn-395. Residues 340-433 (SPTNVGINTT…LPFPFGCARN (94 aa)) form the Fibronectin type-III domain.

It belongs to the peptidase M28 family. M28B subfamily. It depends on Zn(2+) as a cofactor.

The protein resides in the secreted. This Pyrenophora tritici-repentis (strain Pt-1C-BFP) (Wheat tan spot fungus) protein is Probable zinc metalloprotease PTRG_04772.